The chain runs to 398 residues: G2/mitotic-specific cyclin-B2 (398 aa).

The residue at position 8 (Thr8) is a Phosphothreonine. 3 positions are modified to phosphoserine: Ser11, Ser77, and Ser92. Phosphothreonine is present on Thr94. 3 positions are modified to phosphoserine: Ser99, Ser392, and Ser398.

The protein belongs to the cyclin family. Cyclin AB subfamily. Interacts with the CDK1 protein kinase to form a serine/threonine kinase holoenzyme complex also known as maturation promoting factor (MPF). The cyclin subunit imparts substrate specificity to the complex.

Essential for the control of the cell cycle at the G2/M (mitosis) transition. The chain is G2/mitotic-specific cyclin-B2 (CCNB2) from Macaca fascicularis (Crab-eating macaque).